Here is a 961-residue protein sequence, read N- to C-terminus: Protein lin-2 (961 aa).

Positions 17 to 281 (LSIRDVIEQG…AKEALNHEWI (265 aa)) constitute a Protein kinase domain. The segment at 310 to 320 (KSNVLSAVNSG) is calmodulin-binding. The tract at residues 318 to 366 (NSGRFDETTPRQDTPQTAFVDGSSPGGDCCHRGESSSNDAAEPPADKDL) is disordered. L27 domains are found at residues 365–422 (DLSG…CEPV) and 428–479 (TSTL…RDPK). Residues 545-620 (RLVQFQKDTQ…MLRDARGQVT (76 aa)) form the PDZ domain. The region spanning 633–717 (ACEIFVRAQF…PSPELQEWRT (85 aa)) is the SH3 domain. One can recognise a Guanylate kinase-like domain in the interval 774-946 (RKTLVLLGAH…TIAQLERLVE (173 aa)).

It belongs to the MAGUK family.

May play a structural role in the induction of the vulva. May be required for the localization of signal transduction molecules (such as let-23 receptor) to either the basal membrane domain or the cell junctions. This chain is Protein lin-2 (lin-2), found in Caenorhabditis elegans.